A 600-amino-acid polypeptide reads, in one-letter code: Aspartate--tRNA(Asp/Asn) ligase (600 aa).

E174 contributes to the L-aspartate binding site. Positions 198 to 201 (QLFK) are aspartate. R220 is a binding site for L-aspartate. ATP is bound by residues 220 to 222 (RDE) and Q229. H457 provides a ligand contact to L-aspartate. E491 serves as a coordination point for ATP. R498 lines the L-aspartate pocket. 543–546 (GLDR) contributes to the ATP binding site.

Belongs to the class-II aminoacyl-tRNA synthetase family. Type 1 subfamily. As to quaternary structure, homodimer.

The protein resides in the cytoplasm. The enzyme catalyses tRNA(Asx) + L-aspartate + ATP = L-aspartyl-tRNA(Asx) + AMP + diphosphate. In terms of biological role, aspartyl-tRNA synthetase with relaxed tRNA specificity since it is able to aspartylate not only its cognate tRNA(Asp) but also tRNA(Asn). Reaction proceeds in two steps: L-aspartate is first activated by ATP to form Asp-AMP and then transferred to the acceptor end of tRNA(Asp/Asn). The protein is Aspartate--tRNA(Asp/Asn) ligase of Burkholderia multivorans (strain ATCC 17616 / 249).